The chain runs to 211 residues: Germin-like protein subfamily 3 member 3 (211 aa).

Positions 1 to 20 (MKMIIQIFFIISLISTISFA) are cleaved as a signal peptide. C26 and C41 form a disulfide bridge. Positions 55-201 (TGLGTAGNTS…TTFLSDAEVK (147 aa)) constitute a Cupin type-1 domain. An N-linked (GlcNAc...) asparagine glycan is attached at N62. Positions 103, 105, and 110 each coordinate Mn(2+). Position 140 is a phosphoserine (S140). Mn(2+) is bound at residue H149.

This sequence belongs to the germin family. In terms of assembly, oligomer (believed to be a pentamer but probably hexamer). Expressed in leaves and flowers.

The protein localises to the secreted. Its subcellular location is the extracellular space. It is found in the apoplast. In terms of biological role, may play a role in plant defense. Probably has no oxalate oxidase activity even if the active site is conserved. The protein is Germin-like protein subfamily 3 member 3 (GER3) of Arabidopsis thaliana (Mouse-ear cress).